Here is a 488-residue protein sequence, read N- to C-terminus: Putative BPI/LBP family protein At1g04970 (488 aa).

Positions 1 to 24 are cleaved as a signal peptide; the sequence is MDVGRCFLFLLLPSFFFLPSQTQS. Residues N79, N109, N231, N242, and N341 are each glycosylated (N-linked (GlcNAc...) asparagine).

The protein belongs to the BPI/LBP/Plunc superfamily. BPI/LBP (TC 1.C.40) family.

This chain is Putative BPI/LBP family protein At1g04970, found in Arabidopsis thaliana (Mouse-ear cress).